The sequence spans 396 residues: Elongation factor Tu (396 aa).

One can recognise a tr-type G domain in the interval 10–206; the sequence is KPHCNIGTIG…AVDSYIPQPE (197 aa). Residues 19 to 26 form a G1 region; the sequence is GHVDHGKT. Residue 19 to 26 participates in GTP binding; that stretch reads GHVDHGKT. Residue T26 coordinates Mg(2+). Residues 60–64 are G2; the sequence is GITIS. Positions 81 to 84 are G3; sequence DCPG. Residues 81 to 85 and 136 to 139 contribute to the GTP site; these read DCPGH and NKVD. Positions 136–139 are G4; that stretch reads NKVD. Positions 174–176 are G5; that stretch reads SAV.

This sequence belongs to the TRAFAC class translation factor GTPase superfamily. Classic translation factor GTPase family. EF-Tu/EF-1A subfamily. In terms of assembly, monomer.

Its subcellular location is the cytoplasm. The enzyme catalyses GTP + H2O = GDP + phosphate + H(+). GTP hydrolase that promotes the GTP-dependent binding of aminoacyl-tRNA to the A-site of ribosomes during protein biosynthesis. This chain is Elongation factor Tu, found in Rhizorhabdus wittichii (strain DSM 6014 / CCUG 31198 / JCM 15750 / NBRC 105917 / EY 4224 / RW1) (Sphingomonas wittichii).